We begin with the raw amino-acid sequence, 321 residues long: UDP-N-acetyl-alpha-D-glucosaminuronate decarboxylase (321 aa).

Residues G12, F13, I14, D33, N34, Y36, G38, L76, T95, A117, Y148, and K152 each coordinate NAD(+). Y148 acts as the Proton acceptor in catalysis.

It belongs to the NAD(P)-dependent epimerase/dehydratase family. As to quaternary structure, homodimer. The cofactor is NAD(+).

The catalysed reaction is UDP-2-acetamido-2-deoxy-alpha-D-glucuronate + H(+) = UDP-N-acetyl-alpha-D-xylosamine + CO2. Its activity is regulated as follows. Activity is completely inhibited by NADH but not by NADPH. Its function is as follows. Decarboxylase involved in the biosynthesis of the nucleotide-sugar UDP-N-acetylxylosamine (UDP-XylNAc). Catalyzes the NAD-dependent decarboxylation of UDP-N-acetylglucosaminuronic acid (UDP-GlcNAcA) to UDP-XylNAc. Cannot use other UDP-uronates, such as UDP-glucuronic acid (UDP-GlcA) and UDP-galacturonic acid (UDP-GalA). This chain is UDP-N-acetyl-alpha-D-glucosaminuronate decarboxylase, found in Bacillus cytotoxicus (strain DSM 22905 / CIP 110041 / 391-98 / NVH 391-98).